The chain runs to 83 residues: Small ribosomal subunit protein bS16 (83 aa).

Belongs to the bacterial ribosomal protein bS16 family.

This is Small ribosomal subunit protein bS16 from Thermosynechococcus vestitus (strain NIES-2133 / IAM M-273 / BP-1).